Reading from the N-terminus, the 332-residue chain is Succinylglutamate desuccinylase (332 aa).

Zn(2+)-binding residues include histidine 59, glutamate 62, and histidine 151. Glutamate 215 is an active-site residue.

The protein belongs to the AspA/AstE family. Succinylglutamate desuccinylase subfamily. Zn(2+) is required as a cofactor.

The catalysed reaction is N-succinyl-L-glutamate + H2O = L-glutamate + succinate. Its pathway is amino-acid degradation; L-arginine degradation via AST pathway; L-glutamate and succinate from L-arginine: step 5/5. In terms of biological role, transforms N(2)-succinylglutamate into succinate and glutamate. The protein is Succinylglutamate desuccinylase of Pseudomonas aeruginosa (strain UCBPP-PA14).